The sequence spans 228 residues: 5'-methylthioadenosine/S-adenosylhomocysteine nucleosidase (228 aa).

E11 (proton acceptor) is an active-site residue. Residues G77, I151, and M172 to E173 each bind substrate. D196 (proton donor) is an active-site residue.

It belongs to the PNP/UDP phosphorylase family. MtnN subfamily.

It carries out the reaction S-adenosyl-L-homocysteine + H2O = S-(5-deoxy-D-ribos-5-yl)-L-homocysteine + adenine. It catalyses the reaction S-methyl-5'-thioadenosine + H2O = 5-(methylsulfanyl)-D-ribose + adenine. The catalysed reaction is 5'-deoxyadenosine + H2O = 5-deoxy-D-ribose + adenine. It participates in amino-acid biosynthesis; L-methionine biosynthesis via salvage pathway; S-methyl-5-thio-alpha-D-ribose 1-phosphate from S-methyl-5'-thioadenosine (hydrolase route): step 1/2. In terms of biological role, catalyzes the irreversible cleavage of the glycosidic bond in both 5'-methylthioadenosine (MTA) and S-adenosylhomocysteine (SAH/AdoHcy) to adenine and the corresponding thioribose, 5'-methylthioribose and S-ribosylhomocysteine, respectively. Also cleaves 5'-deoxyadenosine, a toxic by-product of radical S-adenosylmethionine (SAM) enzymes, into 5-deoxyribose and adenine. In Staphylococcus haemolyticus (strain JCSC1435), this protein is 5'-methylthioadenosine/S-adenosylhomocysteine nucleosidase.